Reading from the N-terminus, the 220-residue chain is Adenylate kinase (220 aa).

10 to 15 (GAGKGT) contacts ATP. Residues 30–59 (STGDLFRANISQQTELGKLAKSYMDEGNLV) form an NMP region. AMP contacts are provided by residues Thr-31, Arg-36, 57 to 59 (NLV), 85 to 88 (GFPR), and Gln-92. The segment at 126–164 (GRRICRNDSAHVFHVSYKPPKQEGVCDVCGGELYQRDDD) is LID. ATP-binding positions include Arg-127 and 137–138 (VF). Arg-161 and Arg-172 together coordinate AMP. Gly-200 lines the ATP pocket.

It belongs to the adenylate kinase family. In terms of assembly, monomer.

It is found in the cytoplasm. The catalysed reaction is AMP + ATP = 2 ADP. The protein operates within purine metabolism; AMP biosynthesis via salvage pathway; AMP from ADP: step 1/1. Catalyzes the reversible transfer of the terminal phosphate group between ATP and AMP. Plays an important role in cellular energy homeostasis and in adenine nucleotide metabolism. In Streptomyces avermitilis (strain ATCC 31267 / DSM 46492 / JCM 5070 / NBRC 14893 / NCIMB 12804 / NRRL 8165 / MA-4680), this protein is Adenylate kinase.